We begin with the raw amino-acid sequence, 260 residues long: Thiazole synthase (260 aa).

The Schiff-base intermediate with DXP role is filled by lysine 96. 1-deoxy-D-xylulose 5-phosphate contacts are provided by residues glycine 157, 184–185 (AG), and 206–207 (NT).

Belongs to the ThiG family. As to quaternary structure, homotetramer. Forms heterodimers with either ThiH or ThiS.

Its subcellular location is the cytoplasm. The catalysed reaction is [ThiS sulfur-carrier protein]-C-terminal-Gly-aminoethanethioate + 2-iminoacetate + 1-deoxy-D-xylulose 5-phosphate = [ThiS sulfur-carrier protein]-C-terminal Gly-Gly + 2-[(2R,5Z)-2-carboxy-4-methylthiazol-5(2H)-ylidene]ethyl phosphate + 2 H2O + H(+). It functions in the pathway cofactor biosynthesis; thiamine diphosphate biosynthesis. Its function is as follows. Catalyzes the rearrangement of 1-deoxy-D-xylulose 5-phosphate (DXP) to produce the thiazole phosphate moiety of thiamine. Sulfur is provided by the thiocarboxylate moiety of the carrier protein ThiS. In vitro, sulfur can be provided by H(2)S. The protein is Thiazole synthase of Rhodopseudomonas palustris (strain ATCC BAA-98 / CGA009).